A 189-amino-acid polypeptide reads, in one-letter code: Orotate phosphoribosyltransferase (189 aa).

Residues arginine 94, lysine 95, lysine 98, and 120–128 (EDVTTTGGS) each bind 5-phospho-alpha-D-ribose 1-diphosphate. Threonine 124 and arginine 152 together coordinate orotate.

This sequence belongs to the purine/pyrimidine phosphoribosyltransferase family. PyrE subfamily. As to quaternary structure, homodimer. It depends on Mg(2+) as a cofactor.

It carries out the reaction orotidine 5'-phosphate + diphosphate = orotate + 5-phospho-alpha-D-ribose 1-diphosphate. The protein operates within pyrimidine metabolism; UMP biosynthesis via de novo pathway; UMP from orotate: step 1/2. Functionally, catalyzes the transfer of a ribosyl phosphate group from 5-phosphoribose 1-diphosphate to orotate, leading to the formation of orotidine monophosphate (OMP). In Thermococcus gammatolerans (strain DSM 15229 / JCM 11827 / EJ3), this protein is Orotate phosphoribosyltransferase.